The following is a 420-amino-acid chain: Histidine--tRNA ligase (420 aa).

The protein belongs to the class-II aminoacyl-tRNA synthetase family. As to quaternary structure, homodimer.

The protein localises to the cytoplasm. The catalysed reaction is tRNA(His) + L-histidine + ATP = L-histidyl-tRNA(His) + AMP + diphosphate + H(+). This Thermodesulfovibrio yellowstonii (strain ATCC 51303 / DSM 11347 / YP87) protein is Histidine--tRNA ligase.